A 385-amino-acid chain; its full sequence is DNA replication and repair protein RecF (385 aa).

30 to 37 (GRNGQGKT) contributes to the ATP binding site.

This sequence belongs to the RecF family.

The protein localises to the cytoplasm. The RecF protein is involved in DNA metabolism; it is required for DNA replication and normal SOS inducibility. RecF binds preferentially to single-stranded, linear DNA. It also seems to bind ATP. The polypeptide is DNA replication and repair protein RecF (Leifsonia xyli subsp. xyli (strain CTCB07)).